Consider the following 69-residue polypeptide: U5-agatoxin-Ao1a (69 aa).

The N-terminal stretch at methionine 1–alanine 20 is a signal peptide. The propeptide occupies isoleucine 21 to arginine 34. Intrachain disulfides connect cysteine 36–cysteine 52 and cysteine 43–cysteine 57.

The protein belongs to the neurotoxin 01 (U2-agtx) family. In terms of processing, does not contain a cysteine at position 61 which disrupts the cysteine framework. As to expression, expressed by the venom gland.

It localises to the secreted. This chain is U5-agatoxin-Ao1a, found in Agelena orientalis (Funnel-web spider).